Reading from the N-terminus, the 339-residue chain is DNA-directed RNA polymerase subunit alpha (339 aa).

Positions 1–233 (MVREEVAGST…DLFLPFLHAE (233 aa)) are alpha N-terminal domain (alpha-NTD). The alpha C-terminal domain (alpha-CTD) stretch occupies residues 264-339 (KKGIPLNCIF…IDLLKNKLSF (76 aa)).

This sequence belongs to the RNA polymerase alpha chain family. As to quaternary structure, in plastids the minimal PEP RNA polymerase catalytic core is composed of four subunits: alpha, beta, beta', and beta''. When a (nuclear-encoded) sigma factor is associated with the core the holoenzyme is formed, which can initiate transcription.

The protein resides in the plastid. The protein localises to the chloroplast. It catalyses the reaction RNA(n) + a ribonucleoside 5'-triphosphate = RNA(n+1) + diphosphate. In terms of biological role, DNA-dependent RNA polymerase catalyzes the transcription of DNA into RNA using the four ribonucleoside triphosphates as substrates. The chain is DNA-directed RNA polymerase subunit alpha from Thinopyrum elongatum (Tall wheatgrass).